A 160-amino-acid chain; its full sequence is 2-C-methyl-D-erythritol 2,4-cyclodiphosphate synthase (160 aa).

The a divalent metal cation site is built by Asp9 and His11. Residues 9–11 and 35–36 each bind 4-CDP-2-C-methyl-D-erythritol 2-phosphate; these read DVH and HS. His43 is a binding site for a divalent metal cation. Residues 57–59, 62–66, 101–107, 133–136, Phe140, and Arg143 each bind 4-CDP-2-C-methyl-D-erythritol 2-phosphate; these read DIG, FPDTD, AEAPKMA, and TTSE.

This sequence belongs to the IspF family. In terms of assembly, homotrimer. A divalent metal cation serves as cofactor.

The enzyme catalyses 4-CDP-2-C-methyl-D-erythritol 2-phosphate = 2-C-methyl-D-erythritol 2,4-cyclic diphosphate + CMP. It participates in isoprenoid biosynthesis; isopentenyl diphosphate biosynthesis via DXP pathway; isopentenyl diphosphate from 1-deoxy-D-xylulose 5-phosphate: step 4/6. Functionally, involved in the biosynthesis of isopentenyl diphosphate (IPP) and dimethylallyl diphosphate (DMAPP), two major building blocks of isoprenoid compounds. Catalyzes the conversion of 4-diphosphocytidyl-2-C-methyl-D-erythritol 2-phosphate (CDP-ME2P) to 2-C-methyl-D-erythritol 2,4-cyclodiphosphate (ME-CPP) with a corresponding release of cytidine 5-monophosphate (CMP). The chain is 2-C-methyl-D-erythritol 2,4-cyclodiphosphate synthase from Methylobacillus flagellatus (strain ATCC 51484 / DSM 6875 / VKM B-1610 / KT).